The sequence spans 272 residues: Indole-3-glycerol phosphate synthase (272 aa).

This sequence belongs to the TrpC family.

The catalysed reaction is 1-(2-carboxyphenylamino)-1-deoxy-D-ribulose 5-phosphate + H(+) = (1S,2R)-1-C-(indol-3-yl)glycerol 3-phosphate + CO2 + H2O. It participates in amino-acid biosynthesis; L-tryptophan biosynthesis; L-tryptophan from chorismate: step 4/5. The polypeptide is Indole-3-glycerol phosphate synthase (Mycobacterium leprae (strain Br4923)).